The following is a 571-amino-acid chain: Urease subunit alpha (571 aa).

Residues 133-571 (GGIDTHVHFI…LPLAQRYFLF (439 aa)) enclose the Urease domain. Residues histidine 138, histidine 140, and lysine 221 each coordinate Ni(2+). N6-carboxylysine is present on lysine 221. Residue histidine 223 participates in substrate binding. Histidine 250 and histidine 276 together coordinate Ni(2+). The active-site Proton donor is histidine 324. Position 364 (aspartate 364) interacts with Ni(2+).

This sequence belongs to the metallo-dependent hydrolases superfamily. Urease alpha subunit family. Heterotrimer of UreA (gamma), UreB (beta) and UreC (alpha) subunits. Three heterotrimers associate to form the active enzyme. Requires Ni cation as cofactor. Carboxylation allows a single lysine to coordinate two nickel ions.

Its subcellular location is the cytoplasm. The enzyme catalyses urea + 2 H2O + H(+) = hydrogencarbonate + 2 NH4(+). The protein operates within nitrogen metabolism; urea degradation; CO(2) and NH(3) from urea (urease route): step 1/1. The sequence is that of Urease subunit alpha from Staphylococcus carnosus (strain TM300).